We begin with the raw amino-acid sequence, 263 residues long: Putative TATA-binding protein pB263R (263 aa).

This sequence belongs to the asfivirus B263R family.

Functionally, putative TATA-binding protein. The polypeptide is Putative TATA-binding protein pB263R (Ornithodoros (relapsing fever ticks)).